The sequence spans 331 residues: Quinone oxidoreductase (331 aa).

Alanine 2 carries the N-acetylalanine modification. Lysine 23 carries the post-translational modification N6-acetyllysine. Serine 35 is subject to Phosphoserine. Residues tyrosine 53, serine 158–valine 161, and glycine 181 each bind NADP(+). Position 186 is an N6-acetyllysine (lysine 186). NADP(+)-binding positions include histidine 200, asparagine 231, valine 248 to arginine 251, and valine 271 to leucine 273. Lysine 298 is modified (N6-succinyllysine).

It belongs to the zinc-containing alcohol dehydrogenase family. Quinone oxidoreductase subfamily. As to quaternary structure, homotetramer.

The protein localises to the cytoplasm. The catalysed reaction is 2 a quinone + NADPH + H(+) = 2 a 1,4-benzosemiquinone + NADP(+). Functionally, does not have alcohol dehydrogenase activity. Binds NADP and acts through a one-electron transfer process. Orthoquinones, such as 1,2-naphthoquinone or 9,10-phenanthrenequinone, are the best substrates (in vitro). May act in the detoxification of xenobiotics. Interacts with (AU)-rich elements (ARE) in the 3'-UTR of target mRNA species and enhances their stability. NADPH binding interferes with mRNA binding. The protein is Quinone oxidoreductase (Cryz) of Mus musculus (Mouse).